Reading from the N-terminus, the 199-residue chain is MAHSPIHGRITETEGDLFDAPDGAALIHACNCQGSWGKGIAQAFKNKYPAAFTIYRAHCQNLLSKASYRTVNPVPDEGSLTGNSRKVRLPEGTALVIPPQEHDHMGRHKKHWIICLFTSRGFGRGVSSPAVIIQNTELAVVDMRRQIAELHAEEGLGGFSGELWSCRFNSGLFGVDWALSRKVLEDAGLEVTVVSPREG.

Positions 1 to 199 constitute a Macro domain; it reads MAHSPIHGRI…EVTVVSPREG (199 aa). Residues 15 to 17, 29 to 31, 36 to 41, and 168 to 174 contribute to the substrate site; these read GDL, ACN, WGKGIA, and FNSGLFG.

Belongs to the POA1 family.

It catalyses the reaction ADP-alpha-D-ribose 1''-phosphate + H2O = ADP-D-ribose + phosphate. Highly specific phosphatase involved in the metabolism of ADP-ribose 1''-phosphate (Appr1p) which is produced as a consequence of tRNA splicing. The protein is ADP-ribose 1''-phosphate phosphatase (poa1) of Aspergillus clavatus (strain ATCC 1007 / CBS 513.65 / DSM 816 / NCTC 3887 / NRRL 1 / QM 1276 / 107).